Here is a 410-residue protein sequence, read N- to C-terminus: Multifunctional CCA protein (410 aa).

Positions 8 and 11 each coordinate ATP. Gly8 and Arg11 together coordinate CTP. Residues Asp21 and Asp23 each coordinate Mg(2+). ATP-binding residues include Arg91, Arg138, and Arg141. The CTP site is built by Arg91, Arg138, and Arg141. An HD domain is found at 229–347 (TGVHQEMVSD…AQLALVCEAD (119 aa)).

It belongs to the tRNA nucleotidyltransferase/poly(A) polymerase family. Bacterial CCA-adding enzyme type 1 subfamily. Monomer. Can also form homodimers and oligomers. It depends on Mg(2+) as a cofactor. The cofactor is Ni(2+).

It carries out the reaction a tRNA precursor + 2 CTP + ATP = a tRNA with a 3' CCA end + 3 diphosphate. It catalyses the reaction a tRNA with a 3' CCA end + 2 CTP + ATP = a tRNA with a 3' CCACCA end + 3 diphosphate. Functionally, catalyzes the addition and repair of the essential 3'-terminal CCA sequence in tRNAs without using a nucleic acid template. Adds these three nucleotides in the order of C, C, and A to the tRNA nucleotide-73, using CTP and ATP as substrates and producing inorganic pyrophosphate. tRNA 3'-terminal CCA addition is required both for tRNA processing and repair. Also involved in tRNA surveillance by mediating tandem CCA addition to generate a CCACCA at the 3' terminus of unstable tRNAs. While stable tRNAs receive only 3'-terminal CCA, unstable tRNAs are marked with CCACCA and rapidly degraded. The sequence is that of Multifunctional CCA protein from Xanthomonas campestris pv. campestris (strain B100).